Consider the following 374-residue polypeptide: Transcription factor NF-E2 45 kDa subunit (374 aa).

2 disordered regions span residues 1-21 (MSPC…IPEP) and 40-61 (LNAP…GPPP). Residues 1–83 (MSPCPPQQSR…PGFPLPAPPY (83 aa)) form a required for interaction with MAPK8 region. The tract at residues 1–207 (MSPCPPQQSR…PPAETPLALE (207 aa)) is transactivation domain. Positions 48–61 (FEPPAPVPYPGPPP) are enriched in pro residues. Short sequence motifs (PXY motif) lie at residues 61 to 65 (PPPSY) and 79 to 83 (PAPPY). A disordered region spans residues 132 to 165 (LSAGPSKPQEDPESDSGLSLNYSDAESLELEGTE). S158 is subject to Phosphoserine; by MAPK8. Phosphoserine; by PKA is present on S171. The tract at residues 207 to 227 (EPSSGPVRAKPTARGEAGSRD) is disordered. The 64-residue stretch at 267 to 330 (LVRDIRRRGK…EVMRQQLTDL (64 aa)) folds into the bZIP domain. Residues 269-288 (RDIRRRGKNKVAAQNCRKRK) are basic motif. Positions 292 to 299 (IVQLEREL) are leucine-zipper. A Glycyl lysine isopeptide (Lys-Gly) (interchain with G-Cter in SUMO); alternate cross-link involves residue K369. Residue K369 forms a Glycyl lysine isopeptide (Lys-Gly) (interchain with G-Cter in SUMO1); alternate linkage.

The protein belongs to the bZIP family. CNC subfamily. In terms of assembly, homodimer; can bind DNA as a homodimer. Erythroid transcription activator nuclear factor erythroid-derived 2 (NF-E2), composed of a heterodimer of NFE2 and MAFK, possesses transactivation activity on beta-globin. Also forms high affinity heterodimer with MAFG; the interaction promotes erythropoiesis. Interacts (via the PXY motif 1) with ITCH (via the WW 1 domain); the interaction promotes 'Lys63'-linked ubiquitination of NFE2, translocates it to the cytoplasm and inhibits its transactivation activity. Interacts with KMT2D/MLL2; the interaction promotes transactivation of the beta-globin locus. Interacts with MAPK8 (phosphorylated form); the interaction leads to phosphorylation of NFE2 in undifferentiated cells. Phosphorylated on serine residues. In undifferentiated erythrocytes, phosphorylated by MAPK8 which then leads to ubiquitination and protein degradation. Post-translationally, sumoylated. Sumoylation is required for translocation to nuclear bodies PODs, anchoring to the gene loci, and transactivation of the beta-globin gene. In terms of processing, ubiquitinated mainly by 'Lys63'-linked ubiquitin. Polyubiquitination with 'Lys63'-linked ubiquitin by ITCH retains NFE2 in the cytoplasm preventing its transactivation activity. In undifferentiated erythrocyte, is ubiquitinated after MAPK8-mediatd phosphorylation leading to protein degradation.

It localises to the nucleus. It is found in the cytoplasm. Functionally, component of the NF-E2 complex essential for regulating erythroid and megakaryocytic maturation and differentiation. Binds to the hypersensitive site 2 (HS2) of the beta-globin control region (LCR). This subunit (NFE2) recognizes the TCAT/C sequence of the AP-1-like core palindrome present in a number of erythroid and megakaryocytic gene promoters. Requires MAFK or other small MAF proteins for binding to the NF-E2 motif. May play a role in all aspects of hemoglobin production from globin and heme synthesis to procurement of iron. In Bos taurus (Bovine), this protein is Transcription factor NF-E2 45 kDa subunit (NFE2).